Reading from the N-terminus, the 506-residue chain is Asparagine--tRNA ligase (506 aa).

This sequence belongs to the class-II aminoacyl-tRNA synthetase family. In terms of assembly, homodimer.

Its subcellular location is the cytoplasm. The enzyme catalyses tRNA(Asn) + L-asparagine + ATP = L-asparaginyl-tRNA(Asn) + AMP + diphosphate + H(+). This is Asparagine--tRNA ligase from Onion yellows phytoplasma (strain OY-M).